The sequence spans 240 residues: Uridylate kinase (240 aa).

Residue 12-15 (KLSG) participates in ATP binding. Residues 20-25 (GSQGFG) form an involved in allosteric activation by GTP region. Gly54 provides a ligand contact to UMP. 2 residues coordinate ATP: Gly55 and Arg59. Residues Asp74 and 135–142 (TGNPYFST) contribute to the UMP site. ATP is bound by residues Tyr168 and Asp171.

The protein belongs to the UMP kinase family. Homohexamer.

It is found in the cytoplasm. The enzyme catalyses UMP + ATP = UDP + ADP. It participates in pyrimidine metabolism; CTP biosynthesis via de novo pathway; UDP from UMP (UMPK route): step 1/1. Allosterically activated by GTP. Inhibited by UTP. Catalyzes the reversible phosphorylation of UMP to UDP. The sequence is that of Uridylate kinase from Desulfitobacterium hafniense (strain Y51).